The primary structure comprises 77 residues: Large ribosomal subunit protein eL14 (77 aa).

Belongs to the eukaryotic ribosomal protein eL14 family.

The protein is Large ribosomal subunit protein eL14 of Methanococcus maripaludis (strain C5 / ATCC BAA-1333).